Reading from the N-terminus, the 511-residue chain is Frizzled/smoothened-like sans CRD protein C (511 aa).

The first 25 residues, 1–25 (MNQINKFIKNLYLIIITIILIIVIS), serve as a signal peptide directing secretion. Topologically, residues 26 to 93 (NDNNGLFING…QWESYFEMSL (68 aa)) are extracellular. An N-linked (GlcNAc...) asparagine glycan is attached at Asn51. A helical membrane pass occupies residues 94–114 (IMGSISMFASLFLIITYSPLI). The Cytoplasmic portion of the chain corresponds to 115 to 122 (NKKHTRHT). The chain crosses the membrane as a helical span at residues 123–143 (VGILCMSIGIFFVMVSDGRQL). Residues 144–172 (WDIESPGEYKKYCPDTGRYARQSDTKCLT) are Extracellular-facing. The chain crosses the membrane as a helical span at residues 173 to 193 (TGLFFQFGCVTAIGWWSILAV). The Cytoplasmic portion of the chain corresponds to 194–209 (DLWMTIAKKVQTTKKQ). Residues 210 to 230 (LLYYLIGINTVSLILTFGPVV) form a helical membrane-spanning segment. Topologically, residues 231–253 (KNQYGFGNAAIGCWMLDLKYQYG) are extracellular. A helical transmembrane segment spans residues 254-274 (FFWIPVGICLSVGSVFIGLIF). The Cytoplasmic portion of the chain corresponds to 275–295 (WEIYKISDAVKKRYLKKHIKP). A helical transmembrane segment spans residues 296 to 316 (LCLIVLMCLEFLYMFIYYSYI). At 317–357 (TANQPTYNKHVAEYIMCLIINAANVPGSYTCQLKTVSPTAQ) the chain is on the extracellular side. Residues 358–378 (FLFLIAIRLMGLQGLIFYGLT) traverse the membrane as a helical segment. Residues 379 to 511 (AATKKVWANS…RVNSPDNLQP (133 aa)) are Cytoplasmic-facing. Residues 430–511 (NGYTTGGSDN…RVNSPDNLQP (82 aa)) form a disordered region. Gly residues predominate over residues 433-443 (TTGGSDNGVGS). Residues 451-460 (KSSSNGGAQD) are compositionally biased toward polar residues. The segment covering 461–485 (NNNNNNNNNNNNNNNNNNNNNNNNN) has biased composition (low complexity). Over residues 486–511 (SSSLEISGVESNNSTPRVNSPDNLQP) the composition is skewed to polar residues.

It belongs to the G-protein coupled receptor Fz/Smo family.

It localises to the membrane. This Dictyostelium discoideum (Social amoeba) protein is Frizzled/smoothened-like sans CRD protein C (fscC).